Consider the following 260-residue polypeptide: Endomucin (260 aa).

An N-terminal signal peptide occupies residues 1-18; that stretch reads MELLQVTILFLLPSICSS. N-linked (GlcNAc...) asparagine glycans are attached at residues N19, N28, N97, and N103. Topologically, residues 19–189 are extracellular; that stretch reads NSTGVLEAAN…TSATSRSYSS (171 aa). Composition is skewed to polar residues over residues 119–133 and 145–170; these read QSSK…SIKT and ASPS…SQVI. Positions 119-182 are disordered; the sequence is QSSKPKTETQ…EGGKNASTSA (64 aa). N-linked (GlcNAc...) asparagine glycans are attached at residues N163 and N177. Residues 190–210 form a helical membrane-spanning segment; it reads IILPVVIALIVITLSVFVLVG. Residues 211-260 lie on the Cytoplasmic side of the membrane; the sequence is LYRMCWKADPGTPENGNDQPQSDKESVKLLTVKTISHESGEHSAQGKTKN. Residue S236 is modified to Phosphoserine.

Post-translationally, highly O-glycosylated. Sialic acid-rich glycoprotein.

The protein localises to the membrane. Functionally, endothelial sialomucin, also called endomucin or mucin-like sialoglycoprotein, which interferes with the assembly of focal adhesion complexes and inhibits interaction between cells and the extracellular matrix. This is Endomucin (EMCN) from Pongo abelii (Sumatran orangutan).